The following is a 325-amino-acid chain: Tagatose 1,6-diphosphate aldolase 1 (325 aa).

It belongs to the aldolase LacD family.

The catalysed reaction is D-tagatofuranose 1,6-bisphosphate = D-glyceraldehyde 3-phosphate + dihydroxyacetone phosphate. Its pathway is carbohydrate metabolism; D-tagatose 6-phosphate degradation; D-glyceraldehyde 3-phosphate and glycerone phosphate from D-tagatose 6-phosphate: step 2/2. The protein is Tagatose 1,6-diphosphate aldolase 1 (lacD1) of Enterococcus faecalis (strain ATCC 700802 / V583).